Consider the following 208-residue polypeptide: Uracil phosphoribosyltransferase (208 aa).

Residues R78, R103, and 130–138 (DPMLATANS) each bind 5-phospho-alpha-D-ribose 1-diphosphate. Residues I193 and 198-200 (GDA) contribute to the uracil site. Position 199 (D199) interacts with 5-phospho-alpha-D-ribose 1-diphosphate.

The protein belongs to the UPRTase family. The cofactor is Mg(2+).

The catalysed reaction is UMP + diphosphate = 5-phospho-alpha-D-ribose 1-diphosphate + uracil. It participates in pyrimidine metabolism; UMP biosynthesis via salvage pathway; UMP from uracil: step 1/1. With respect to regulation, allosterically activated by GTP. Catalyzes the conversion of uracil and 5-phospho-alpha-D-ribose 1-diphosphate (PRPP) to UMP and diphosphate. In Brucella abortus biovar 1 (strain 9-941), this protein is Uracil phosphoribosyltransferase.